A 600-amino-acid polypeptide reads, in one-letter code: Proline dehydrogenase 1, mitochondrial (600 aa).

The disordered stretch occupies residues 155-177 (AEHKEMESCTSAAERDGSGTNKR). N6-acetyllysine is present on residues K368 and K486.

The protein belongs to the proline oxidase family. It depends on FAD as a cofactor. As to expression, expressed in lung, skeletal muscle and brain, to a lesser extent in heart and kidney, and weakly in liver, placenta and pancreas.

Its subcellular location is the mitochondrion matrix. It catalyses the reaction L-proline + a quinone = (S)-1-pyrroline-5-carboxylate + a quinol + H(+). The protein operates within amino-acid degradation; L-proline degradation into L-glutamate; L-glutamate from L-proline: step 1/2. Functionally, converts proline to delta-1-pyrroline-5-carboxylate. The protein is Proline dehydrogenase 1, mitochondrial of Homo sapiens (Human).